The chain runs to 521 residues: Bifunctional purine biosynthesis protein PurH (521 aa).

The MGS-like domain occupies 1-149 (MSDPVIKRAL…KNNESVTVVT (149 aa)).

It belongs to the PurH family.

The enzyme catalyses (6R)-10-formyltetrahydrofolate + 5-amino-1-(5-phospho-beta-D-ribosyl)imidazole-4-carboxamide = 5-formamido-1-(5-phospho-D-ribosyl)imidazole-4-carboxamide + (6S)-5,6,7,8-tetrahydrofolate. It catalyses the reaction IMP + H2O = 5-formamido-1-(5-phospho-D-ribosyl)imidazole-4-carboxamide. The protein operates within purine metabolism; IMP biosynthesis via de novo pathway; 5-formamido-1-(5-phospho-D-ribosyl)imidazole-4-carboxamide from 5-amino-1-(5-phospho-D-ribosyl)imidazole-4-carboxamide (10-formyl THF route): step 1/1. It participates in purine metabolism; IMP biosynthesis via de novo pathway; IMP from 5-formamido-1-(5-phospho-D-ribosyl)imidazole-4-carboxamide: step 1/1. The protein is Bifunctional purine biosynthesis protein PurH of Chlorobium phaeobacteroides (strain DSM 266 / SMG 266 / 2430).